The sequence spans 177 residues: Large ribosomal subunit protein uL6 (177 aa).

The protein belongs to the universal ribosomal protein uL6 family. In terms of assembly, part of the 50S ribosomal subunit.

Its function is as follows. This protein binds to the 23S rRNA, and is important in its secondary structure. It is located near the subunit interface in the base of the L7/L12 stalk, and near the tRNA binding site of the peptidyltransferase center. This Dinoroseobacter shibae (strain DSM 16493 / NCIMB 14021 / DFL 12) protein is Large ribosomal subunit protein uL6.